Reading from the N-terminus, the 198-residue chain is Protein GrpE (198 aa).

A compositionally biased stretch (basic and acidic residues) spans 1–21; it reads MMKKAEDPLQDREGTIQEHTE. The disordered stretch occupies residues 1–56; that stretch reads MMKKAEDPLQDREGTIQEHTEGQAGTAAADQSAAVETPESRIAGLEREVQAEKEQN. A compositionally biased stretch (low complexity) spans 22–34; sequence GQAGTAAADQSAA. Positions 44–56 are enriched in basic and acidic residues; it reads GLEREVQAEKEQN.

The protein belongs to the GrpE family. Homodimer.

The protein localises to the cytoplasm. In terms of biological role, participates actively in the response to hyperosmotic and heat shock by preventing the aggregation of stress-denatured proteins, in association with DnaK and GrpE. It is the nucleotide exchange factor for DnaK and may function as a thermosensor. Unfolded proteins bind initially to DnaJ; upon interaction with the DnaJ-bound protein, DnaK hydrolyzes its bound ATP, resulting in the formation of a stable complex. GrpE releases ADP from DnaK; ATP binding to DnaK triggers the release of the substrate protein, thus completing the reaction cycle. Several rounds of ATP-dependent interactions between DnaJ, DnaK and GrpE are required for fully efficient folding. This is Protein GrpE from Chlorobium luteolum (strain DSM 273 / BCRC 81028 / 2530) (Pelodictyon luteolum).